Reading from the N-terminus, the 493-residue chain is Glutamyl-tRNA(Gln) amidotransferase subunit A (493 aa).

Residues lysine 78 and serine 158 each act as charge relay system in the active site. Catalysis depends on serine 182, which acts as the Acyl-ester intermediate.

Belongs to the amidase family. GatA subfamily. Heterotrimer of A, B and C subunits.

It catalyses the reaction L-glutamyl-tRNA(Gln) + L-glutamine + ATP + H2O = L-glutaminyl-tRNA(Gln) + L-glutamate + ADP + phosphate + H(+). Its function is as follows. Allows the formation of correctly charged Gln-tRNA(Gln) through the transamidation of misacylated Glu-tRNA(Gln) in organisms which lack glutaminyl-tRNA synthetase. The reaction takes place in the presence of glutamine and ATP through an activated gamma-phospho-Glu-tRNA(Gln). This is Glutamyl-tRNA(Gln) amidotransferase subunit A from Rickettsia rickettsii (strain Iowa).